The following is an 863-amino-acid chain: Major vault protein (863 aa).

9 MVP repeats span residues 2–60 (DADH…VPPR), 61–115 (HYCV…DVTP), 116–168 (LQIV…EVIK), 169–221 (ATVI…DIVS), 222–276 (AFIL…GVVD), 277–327 (VTTL…IQDV), 328–396 (YVLS…TRTA), 397–471 (IPLD…KTRV), and 472–534 (VSYR…LLGP). Residues 349-368 (GDEAEEEERESRAKKRGVQR) form a disordered region. An IQ domain is found at 677–706 (ARHEAERLEQEARGRLERQKITDQAEAEKA).

The vault ribonucleoprotein particle is a huge (400 A x 670 A) cage structure of 12.9 MDa. It consists of a dimer of half-vaults, with each half-vault comprising 39 identical major vault protein (MVP) chains, PARP4 and one or more vault RNAs (vRNAs).

The protein resides in the cytoplasm. It is found in the nucleus. Required for normal vault structure. Vaults are multi-subunit structures that may act as scaffolds for proteins involved in signal transduction. Vaults may also play a role in nucleo-cytoplasmic transport. The polypeptide is Major vault protein (mvp) (Danio rerio (Zebrafish)).